Here is a 31-residue protein sequence, read N- to C-terminus: Cytochrome b6-f complex subunit 6 (31 aa).

Residues 3-23 form a helical membrane-spanning segment; that stretch reads LIIGYIILLACAFGLAAGLYF.

The protein belongs to the PetL family. As to quaternary structure, the 4 large subunits of the cytochrome b6-f complex are cytochrome b6, subunit IV (17 kDa polypeptide, PetD), cytochrome f and the Rieske protein, while the 4 small subunits are PetG, PetL, PetM and PetN. The complex functions as a dimer.

The protein resides in the plastid. It localises to the chloroplast thylakoid membrane. In terms of biological role, component of the cytochrome b6-f complex, which mediates electron transfer between photosystem II (PSII) and photosystem I (PSI), cyclic electron flow around PSI, and state transitions. PetL is important for photoautotrophic growth as well as for electron transfer efficiency and stability of the cytochrome b6-f complex. The polypeptide is Cytochrome b6-f complex subunit 6 (Guillardia theta (Cryptophyte)).